The following is a 695-amino-acid chain: Elongation factor G 1 (695 aa).

The tr-type G domain maps to 6–284 (SKVRNIGISA…AVETYLPCPT (279 aa)). Residues 15–22 (AHIDSGKT), 82–86 (DTPGH), and 136–139 (NKCD) each bind GTP.

It belongs to the TRAFAC class translation factor GTPase superfamily. Classic translation factor GTPase family. EF-G/EF-2 subfamily.

It localises to the cytoplasm. Its function is as follows. Catalyzes the GTP-dependent ribosomal translocation step during translation elongation. During this step, the ribosome changes from the pre-translocational (PRE) to the post-translocational (POST) state as the newly formed A-site-bound peptidyl-tRNA and P-site-bound deacylated tRNA move to the P and E sites, respectively. Catalyzes the coordinated movement of the two tRNA molecules, the mRNA and conformational changes in the ribosome. In Desulfotalea psychrophila (strain LSv54 / DSM 12343), this protein is Elongation factor G 1.